Here is a 272-residue protein sequence, read N- to C-terminus: Imidazole glycerol phosphate synthase subunit HisF (272 aa).

Catalysis depends on residues Asp-12 and Asp-131.

This sequence belongs to the HisA/HisF family. Heterodimer of HisH and HisF.

The protein resides in the cytoplasm. It carries out the reaction 5-[(5-phospho-1-deoxy-D-ribulos-1-ylimino)methylamino]-1-(5-phospho-beta-D-ribosyl)imidazole-4-carboxamide + L-glutamine = D-erythro-1-(imidazol-4-yl)glycerol 3-phosphate + 5-amino-1-(5-phospho-beta-D-ribosyl)imidazole-4-carboxamide + L-glutamate + H(+). Its pathway is amino-acid biosynthesis; L-histidine biosynthesis; L-histidine from 5-phospho-alpha-D-ribose 1-diphosphate: step 5/9. Its function is as follows. IGPS catalyzes the conversion of PRFAR and glutamine to IGP, AICAR and glutamate. The HisF subunit catalyzes the cyclization activity that produces IGP and AICAR from PRFAR using the ammonia provided by the HisH subunit. This is Imidazole glycerol phosphate synthase subunit HisF from Methanopyrus kandleri (strain AV19 / DSM 6324 / JCM 9639 / NBRC 100938).